The primary structure comprises 271 residues: PA-phosphatase related-family protein DDB_G0284367 (271 aa).

The next 6 membrane-spanning stretches (helical) occupy residues 23-43 (FLCL…IPPF), 68-88 (IVPV…VFIG), 102-122 (AALG…ILKV), 150-170 (FPSG…FYLC), 181-201 (GNIL…LVAV), and 211-231 (FSDI…VYFM).

The protein belongs to the PA-phosphatase related phosphoesterase family.

Its subcellular location is the membrane. This is PA-phosphatase related-family protein DDB_G0284367 from Dictyostelium discoideum (Social amoeba).